The sequence spans 253 residues: Imidazole glycerol phosphate synthase subunit HisF (253 aa).

Active-site residues include Asp-11 and Asp-130.

This sequence belongs to the HisA/HisF family. In terms of assembly, heterodimer of HisH and HisF.

It localises to the cytoplasm. The enzyme catalyses 5-[(5-phospho-1-deoxy-D-ribulos-1-ylimino)methylamino]-1-(5-phospho-beta-D-ribosyl)imidazole-4-carboxamide + L-glutamine = D-erythro-1-(imidazol-4-yl)glycerol 3-phosphate + 5-amino-1-(5-phospho-beta-D-ribosyl)imidazole-4-carboxamide + L-glutamate + H(+). It functions in the pathway amino-acid biosynthesis; L-histidine biosynthesis; L-histidine from 5-phospho-alpha-D-ribose 1-diphosphate: step 5/9. Its function is as follows. IGPS catalyzes the conversion of PRFAR and glutamine to IGP, AICAR and glutamate. The HisF subunit catalyzes the cyclization activity that produces IGP and AICAR from PRFAR using the ammonia provided by the HisH subunit. This Dinoroseobacter shibae (strain DSM 16493 / NCIMB 14021 / DFL 12) protein is Imidazole glycerol phosphate synthase subunit HisF.